Here is a 139-residue protein sequence, read N- to C-terminus: Acidic phospholipase A2 DE-I (139 aa).

An N-terminal signal peptide occupies residues 1-16 (MRTLWIMAVLLLGVEG). Disulfide bonds link C42/C132, C44/C60, C59/C111, C65/C139, C66/C104, C73/C97, and C91/C102. Positions 43, 45, and 47 each coordinate Ca(2+). H63 is an active-site residue. D64 provides a ligand contact to Ca(2+). D105 is an active-site residue.

It depends on Ca(2+) as a cofactor. As to expression, expressed by the venom gland.

The protein localises to the secreted. The enzyme catalyses a 1,2-diacyl-sn-glycero-3-phosphocholine + H2O = a 1-acyl-sn-glycero-3-phosphocholine + a fatty acid + H(+). Its function is as follows. Snake venom phospholipase A2 (PLA2) that inhibits the ADP- and collagen-induced human platelet aggregation. Exhibits high hydrolytic activities and preferred the anionic micelles to the zwitterionic micelles. PLA2 catalyzes the calcium-dependent hydrolysis of the 2-acyl groups in 3-sn-phosphoglycerides. The polypeptide is Acidic phospholipase A2 DE-I (Ovophis okinavensis (Ryukyu Island pit viper)).